The sequence spans 899 residues: Plasma membrane ATPase (899 aa).

The interval 1 to 72 (MSAATEPTKE…TDPSYGLTSD (72 aa)) is disordered. The Cytoplasmic segment spans residues 1-96 (MSAATEPTKE…SEETENLFVK (96 aa)). Positions 17 to 29 (DSDDEDEDIDQLI) are enriched in acidic residues. The helical transmembrane segment at 97–117 (FLMFFIGPIQFVMEAAAILAA) threads the bilayer. At 118-121 (GLED) the chain is on the extracellular side. Residues 122-141 (WVDFGVICGLLFLNAAVGFI) traverse the membrane as a helical segment. The Cytoplasmic segment spans residues 142–272 (QEYQAGSIVD…GSGHFTEVLN (131 aa)). The helical transmembrane segment at 273-294 (GIGTILLILVIVTLLLVWVASF) threads the bilayer. The Extracellular segment spans residues 295-305 (YRTNKIVRILR). The helical transmembrane segment at 306–328 (YTLAITIVGVPVGLPAVVTTTMA) threads the bilayer. Over 329-700 (VGAAYLAKKQ…IAILNRSLNI (372 aa)) the chain is Cytoplasmic. Asp359 functions as the 4-aspartylphosphate intermediate in the catalytic mechanism. 2 residues coordinate Mg(2+): Asp615 and Asp619. The helical transmembrane segment at 701–719 (DLVVFIAIFADVATLAIAY) threads the bilayer. Over 720–735 (DNAPYSPKPVKWNLRR) the chain is Extracellular. Residues 736-755 (LWGMSVILGIILAIGTWITL) form a helical membrane-spanning segment. At 756–805 (TTMFVPKGGIIQNFGSIDGVLFLQISLTENWLIFITRAAGPFWSSIPSWQ) the chain is on the cytoplasmic side. The helical transmembrane segment at 806 to 826 (LSGAVLIVDIIATMFCLFGWW) threads the bilayer. The Extracellular segment spans residues 827–838 (SQNWNDIVTVVR). Residues 839–855 (VWIFSFGVFCVMGGAYY) form a helical membrane-spanning segment. The Cytoplasmic segment spans residues 856–899 (MMSESEAFDRFMNGKSRRDKPSGRSVEDFLMAMQRVSTQHEKEN).

The protein belongs to the cation transport ATPase (P-type) (TC 3.A.3) family. Type IIIA subfamily.

The protein resides in the cell membrane. It catalyses the reaction ATP + H2O + H(+)(in) = ADP + phosphate + 2 H(+)(out). Activated by high pH or also by potassium ions when the medium pH is low. Its function is as follows. The plasma membrane ATPase of plants and fungi is a hydrogen ion pump. The proton gradient it generates drives the active transport of nutrients by H(+)-symport. The resulting external acidification and/or internal alkinization may mediate growth responses. The protein is Plasma membrane ATPase (PMA1) of Kluyveromyces lactis (strain ATCC 8585 / CBS 2359 / DSM 70799 / NBRC 1267 / NRRL Y-1140 / WM37) (Yeast).